The primary structure comprises 151 residues: MQIILLEKVANLGNLGEVVRVRDGYARNFLIPQKKARRATDAALKEFEARRAELEKVQAEKLAAAQALAERLNGFQLKISQKAGVDGRLFGSVTNADVAEGLRKAGFEAVEKSQVRMPNGQIKAVGEYLVQAVLHADVVADVVVLVEGEMA.

Belongs to the bacterial ribosomal protein bL9 family.

Functionally, binds to the 23S rRNA. This Bordetella pertussis (strain Tohama I / ATCC BAA-589 / NCTC 13251) protein is Large ribosomal subunit protein bL9.